The following is a 241-amino-acid chain: Uridylate kinase (241 aa).

Residue 12 to 15 (KLSG) coordinates ATP. Residues 20-25 (GDKGTG) form an involved in allosteric activation by GTP region. Glycine 54 contributes to the UMP binding site. ATP-binding residues include glycine 55 and arginine 59. UMP-binding positions include aspartate 74 and 135-142 (TGSPYFST). Asparagine 163, tyrosine 169, and aspartate 172 together coordinate ATP.

The protein belongs to the UMP kinase family. Homohexamer.

It is found in the cytoplasm. It catalyses the reaction UMP + ATP = UDP + ADP. The protein operates within pyrimidine metabolism; CTP biosynthesis via de novo pathway; UDP from UMP (UMPK route): step 1/1. Allosterically activated by GTP. Inhibited by UTP. In terms of biological role, catalyzes the reversible phosphorylation of UMP to UDP. In Pediococcus pentosaceus (strain ATCC 25745 / CCUG 21536 / LMG 10740 / 183-1w), this protein is Uridylate kinase.